The sequence spans 65 residues: Weak toxin CM-11 (65 aa).

Cystine bridges form between Cys-3–Cys-24, Cys-6–Cys-11, Cys-17–Cys-42, Cys-46–Cys-57, and Cys-58–Cys-63.

This sequence belongs to the three-finger toxin family. Ancestral subfamily. Orphan group II sub-subfamily. In terms of tissue distribution, expressed by the venom gland.

The protein localises to the secreted. Functionally, binds with low affinity to muscular (alpha-1-beta-1-delta-epsilon/CHRNA1-CHRNB1-CHRND-CHRNE) and very low affinity to neuronal (alpha-7/CHRNA7) nicotinic acetylcholine receptor (nAChR). This Naja haje haje (Egyptian cobra) protein is Weak toxin CM-11.